A 301-amino-acid polypeptide reads, in one-letter code: Ribonuclease Z (301 aa).

Zn(2+) is bound by residues His-60, His-62, Asp-64, His-65, His-137, Asp-207, and His-265. Asp-64 functions as the Proton acceptor in the catalytic mechanism.

This sequence belongs to the RNase Z family. Homodimer. The cofactor is Zn(2+).

The catalysed reaction is Endonucleolytic cleavage of RNA, removing extra 3' nucleotides from tRNA precursor, generating 3' termini of tRNAs. A 3'-hydroxy group is left at the tRNA terminus and a 5'-phosphoryl group is left at the trailer molecule.. In terms of biological role, zinc phosphodiesterase, which displays some tRNA 3'-processing endonuclease activity. Probably involved in tRNA maturation, by removing a 3'-trailer from precursor tRNA. The chain is Ribonuclease Z from Exiguobacterium sibiricum (strain DSM 17290 / CCUG 55495 / CIP 109462 / JCM 13490 / 255-15).